The sequence spans 273 residues: Exosome complex component Rrp42 (273 aa).

The protein belongs to the RNase PH family. Rrp42 subfamily. As to quaternary structure, component of the archaeal exosome complex. Forms a hexameric ring-like arrangement composed of 3 Rrp41-Rrp42 heterodimers. The hexameric ring associates with a trimer of Rrp4 and/or Csl4 subunits.

Its subcellular location is the cytoplasm. Non-catalytic component of the exosome, which is a complex involved in RNA degradation. Contributes to the structuring of the Rrp41 active site. The chain is Exosome complex component Rrp42 from Thermococcus gammatolerans (strain DSM 15229 / JCM 11827 / EJ3).